Reading from the N-terminus, the 573-residue chain is Glutathione hydrolase 5 proenzyme (573 aa).

The Cytoplasmic segment spans residues M1–T8. The helical; Signal-anchor for type II membrane protein transmembrane segment at V9 to L29 threads the bilayer. At S30 to Y573 the chain is on the extracellular side. N98 carries an N-linked (GlcNAc...) asparagine glycan. R110 lines the L-glutamate pocket. N185, N204, N277, N303, N347, and N378 each carry an N-linked (GlcNAc...) asparagine glycan. The active-site Nucleophile is the T389. Residues T407, E428, and S454–S455 contribute to the L-glutamate site.

The protein belongs to the gamma-glutamyltransferase family. As to quaternary structure, heterodimer composed of the light and heavy chains. The active site is located in the light chain. Cleaved by autocatalysis into a large and a small subunit. Post-translationally, glycosylated. As to expression, very low level of expression. Detected in spleen lymphocytes, medullary and paracortical thymic lymphocytes, lung interstitial cells, bronchial epithelium, proximal tubules in kidney, crypt cells in small intestine, neurons in brain stem and cerebral cortex and in Purkinje cells. In terms of tissue distribution, very low expression.

Its subcellular location is the membrane. It carries out the reaction glutathione + H2O = L-cysteinylglycine + L-glutamate. The enzyme catalyses an S-substituted glutathione + H2O = an S-substituted L-cysteinylglycine + L-glutamate. It catalyses the reaction leukotriene C4 + H2O = leukotriene D4 + L-glutamate. The catalysed reaction is S-[(2E,6E,10E)-geranylgeranyl]-L-glutathione + H2O = S-[(2E,6E,10E)-geranylgeranyl]-L-cysteinylglycine + L-glutamate. It carries out the reaction an N-terminal (5-L-glutamyl)-[peptide] + an alpha-amino acid = 5-L-glutamyl amino acid + an N-terminal L-alpha-aminoacyl-[peptide]. It functions in the pathway lipid metabolism; leukotriene D4 biosynthesis. The protein operates within sulfur metabolism; glutathione metabolism. Its activity is regulated as follows. Inhibited by serine-borate. Its function is as follows. Cleaves the gamma-glutamyl bond of extracellular glutathione tripeptide (gamma-Glu-Cys-Gly) and certain glutathione conjugates. Hydrolyzes glutathione releasing L-Glu and Cys-Gly dipeptide which is further metabolized to maintain extracellular cysteine levels but also to provide cysteine necessary for intracellular glutathione synthesis. Among glutathione-S-conjugates metabolizes leukotriene C4 (LTC4) and S-geranylgeranyl-glutathione (GGG), but is inactive toward gamma-glutamyl leucine. Converts extracellular LTC4 to LTD4 during acute inflammatory response. Acts as a negative regulator of GGG bioactivity. GGT5 (via GGG catabolism) and ABCC1 (via extracellular transport) establish GGG gradients within lymphoid tissues to position P2RY8-positive lymphocytes at germinal centers in lymphoid follicles and restrict their chemotactic transmigration from blood vessels to bone marrow parenchyma. The transpeptidation reaction, i.e. the transfer of gamma-glutamyl moiety to an acceptor molecule to yield a new gamma-glutamyl compound requires high concentration of dipeptide acceptor and is considered nonphysiological. The chain is Glutathione hydrolase 5 proenzyme (Ggt5) from Mus musculus (Mouse).